The following is a 291-amino-acid chain: Short-chain dehydrogenase/reductase GME11359 (291 aa).

NADP(+)-binding residues include Leu-18, Asp-67, Asn-96, Tyr-177, Lys-181, and Val-209. Catalysis depends on Tyr-177, which acts as the Proton acceptor. Residue Lys-181 is the Lowers pKa of active site Tyr of the active site.

Belongs to the short-chain dehydrogenases/reductases (SDR) family.

It functions in the pathway secondary metabolite biosynthesis. In terms of biological role, short-chain dehydrogenase/reductase; part of the gene cluster that mediates the biosynthesis of dibenzodioxocinones such as pestalotiollide B, a novel class of inhibitors against cholesterol ester transfer protein (CEPT). The biosynthesis initiates from condensation of acetate and malonate units catalyzed by the non-reducing PKS pks8/GME11356. Pks8/GME11356 lacks a thioesterase (TE) domain, which is important to the cyclizing of the third ring of atrochrysone carboxylic acid, and the esterase GME11355 might play the role of TE and catalyzes the cyclization reaction of the C ring. The lactamase-like protein GME11357 (or other beta-lactamases in Pestalotiopsis microspora) probably hydrolyzes the thioester bond between the ACP of pks8/GME11356 and the intermediate to release atrochrysone carboxylic acid, which is spontaneously dehydrates to form endocrocin anthrone. Endocrocin anthrone is further converted to emodin via the endocrocin intermediate. Emodin is then oxidized by several enzymes such as the Baeyer-Villiger oxidase GME11358, the oxidoreductase GME11367, the short chain dehydrogenase/reductase GME11373, as well as by other oxidoreductases from the cluster, to modify the A and C rings and open the B ring, and finally yield monodictyphenone. The prenyltransferase GME11375 may catalyze the addition reaction between the C5 side chains and the carbon bone of dibenzodioxocinones. The remaining biochemical reactions to the final product dibenzodioxocinones should be methylation catalyzed by methyltransferase GME11366 and reduction and lactonization reaction catalyzed by a series of oxidordeuctases. The protein is Short-chain dehydrogenase/reductase GME11359 of Pestalotiopsis microspora.